A 735-amino-acid polypeptide reads, in one-letter code: Mitochondrial potassium channel ATP-binding subunit (735 aa).

Residues 1–25 constitute a mitochondrion transit peptide; the sequence is MLVHLFRVGIRGGPFPGRLLPPLRF. Residues 26-144 lie on the Mitochondrial matrix side of the membrane; the sequence is QTFSAVRNTW…KLFWQFLHPH (119 aa). The chain crosses the membrane as a helical span at residues 145–165; sequence LLVLGVAVVLALGAALVNVQI. One can recognise an ABC transmembrane type-1 domain in the interval 150–437; the sequence is VAVVLALGAA…LSVLFGQVVR (288 aa). Over 166-195 the chain is Mitochondrial intermembrane; the sequence is PLLLGQLVEVVAKYTRDHVGSFMTESQNLS. A helical membrane pass occupies residues 196–216; that stretch reads THLLILYGVQGLLTFGYLVLL. Over 217–295 the chain is Mitochondrial matrix; the sequence is SHVGERMAVD…SLSMLSTRLT (79 aa). The chain crosses the membrane as a helical span at residues 296 to 316; it reads LLLMVATPALMGVGTLMGSGL. Over 317–735 the chain is Mitochondrial intermembrane; that stretch reads RKLSRQCQEQ…EGPRSHQHKS (419 aa). An ABC transporter domain is found at 472–709; sequence VTFQNVCFSY…GGLYAELIRR (238 aa). An ATP-binding site is contributed by 507–514; it reads GQSGGGKT. Residues 712–735 are disordered; that stretch reads LDAPRTAAPPPKKPEGPRSHQHKS.

The protein belongs to the ABC transporter superfamily. ABCB family. Multidrug resistance exporter (TC 3.A.1.201) subfamily. In terms of assembly, the mitochondrial potassium channel (mitoK(ATP)) is composed of 4 subunits of CCDC51/MITOK and 4 subunits of ABCB8/MITOSUR. Interacts with C10orf88/PAAT. Interacts with NRP1; NRP1 regulates ABCB8/MITOSUR protein levels in mitochondria. In terms of tissue distribution, ubiquitous.

The protein localises to the mitochondrion inner membrane. With respect to regulation, channel activity inhibited by ATP via ABCB8/MITOSUR subunit. Functionally, ATP-binding subunit of the mitochondrial ATP-gated potassium channel (mitoK(ATP)). Together with pore-forming subunit CCDC51/MITOK of the mitoK(ATP) channel, mediates ATP-dependent potassium currents across the mitochondrial inner membrane. An increase in ATP intracellular levels closes the channel, inhibiting K(+) transport, whereas a decrease in ATP levels enhances K(+) uptake in the mitochondrial matrix. Plays a role in mitochondrial iron transport. Required for maintenance of normal cardiac function, possibly by influencing mitochondrial iron export and regulating the maturation of cytosolic iron sulfur cluster-containing enzymes. This Homo sapiens (Human) protein is Mitochondrial potassium channel ATP-binding subunit.